Consider the following 335-residue polypeptide: SLAM family member 7 (335 aa).

Positions 1–22 are cleaved as a signal peptide; it reads MAGSPTCLTLIYILWQLTGSAA. The region spanning 23 to 124 is the Ig-like V-type domain; that stretch reads SGPVKELVGS…PSTQEYVLHV (102 aa). The Extracellular portion of the chain corresponds to 23–226; that stretch reads SGPVKELVGS…GAADDPDSSM (204 aa). 6 N-linked (GlcNAc...) asparagine glycosylation sites follow: N98, N142, N148, N172, N176, and N204. In terms of domain architecture, Ig-like C2-type spans 131 to 206; that stretch reads PKVTMGLQSN…ARNPVSRNFS (76 aa). Disulfide bonds link C145–C215 and C151–C195. The helical transmembrane segment at 227 to 247 threads the bilayer; the sequence is VLLCLLLVPLLLSLFVLGLFL. The Cytoplasmic segment spans residues 248-335; sequence WFLKRERQEE…PRLFAYENVI (88 aa). Residues 278-296 are interaction with FYN when phosphorylated at Tyr-284; it reads SGENTEYDTIPHTNRTILK. An ITSM motif is present at residues 302–307; the sequence is TVYSTV.

In terms of assembly, isoform 1 binds to SH2D1A when its cytoplasmic tail is phosphorylated in the presence of FYN (in vitro); low affinity binding, the physiological relevance of the interaction is questioned. Interacts with SH2D1B; in NK cells. Interacts (via ITSM phosphorylated on Tyr-302) with SH2D1B, PTPN6/SHP-1, PTPN11/SHP-2, INPP5D/SHIP1, CSK and FYN. As to expression, expressed in spleen, lymph node, peripheral blood leukocytes, bone marrow, small intestine, stomach, appendix, lung and trachea. Expression was detected in NK cells, activated B-cells, NK-cell line but not in promyelocytic, B-, or T-cell lines. Expressed in monocytes. Isoform 3 is expressed at much lower level than isoform 1.

Its subcellular location is the membrane. Its function is as follows. Self-ligand receptor of the signaling lymphocytic activation molecule (SLAM) family. SLAM receptors triggered by homo- or heterotypic cell-cell interactions are modulating the activation and differentiation of a wide variety of immune cells and thus are involved in the regulation and interconnection of both innate and adaptive immune response. Activities are controlled by presence or absence of small cytoplasmic adapter proteins, SH2D1A/SAP and/or SH2D1B/EAT-2. Isoform 1 mediates NK cell activation through a SH2D1A-independent extracellular signal-regulated ERK-mediated pathway. Positively regulates NK cell functions by a mechanism dependent on phosphorylated SH2D1B. Downstream signaling implicates PLCG1, PLCG2 and PI3K. In addition to heterotypic NK cells-target cells interactions also homotypic interactions between NK cells may contribute to activation. However, in the absence of SH2D1B, inhibits NK cell function. Also acts inhibitory in T-cells. May play a role in lymphocyte adhesion. In LPS-activated monocytes negatively regulates production of pro-inflammatory cytokines. Functionally, isoform 3 does not mediate any NK cell activation. The sequence is that of SLAM family member 7 (SLAMF7) from Homo sapiens (Human).